Reading from the N-terminus, the 758-residue chain is Meiotic driver SPOK4 (758 aa).

The stretch at 4–41 (KDRITQLLRKLEEAKAREEEAKAREAQERCEKERLQLE) forms a coiled coil. Disordered stretches follow at residues 180-230 (ELTQ…GVGI) and 414-499 (LSSA…MADP). Positions 181-190 (LTQEDDRSSG) are enriched in basic and acidic residues. Positions 416-429 (SAASSQNTENSEYT) are enriched in polar residues. Residues 457-468 (NEHDEHDEDHSE) are compositionally biased toward basic and acidic residues.

The protein localises to the cytoplasm. Its subcellular location is the nucleus. In terms of biological role, promotes unequal transmission of alleles from the parental zygote to progeny spores by acting as poison/antidote system, leading to poisoning of progeny that do not inherit the allele. May possess DNA nuclease activity that leads to spore killing, and a kinase activity that confers resistance to the nuclease activity. Can suppress meiotic drive by the P.comata SPOK1 protein. The polypeptide is Meiotic driver SPOK4 (Podospora anserina (Pleurage anserina)).